A 478-amino-acid polypeptide reads, in one-letter code: MASAMAGAGPAPGLPVAGGPVVPGPGVGIPGKSGEERLKEMEAEMALFEQEVLGAPVTGIPTAVPAVPTVEAMQVPPAPVIRPIIATNTYQQVQQTLEARAAAAATVVPPMVGGPPFVGPVGFGPADRGHLDSPEAREAMFLRRAAVAPQRAPILRPAFVPHVLQRADSALSSAAGGPRPMALRPPHQALVGPPLPGPPGPPMMLPPMARAPGPPLGSMAALRPPLEEPAAPRELGLGLGLGLKDKEEAVVAAAAGLEEASAAVAVGAGGAPAGPAVIGPSLPLALAMPLPEPEPLPLPLEVVRGLLPPLRIPELLSLRPRPRPPRPEPPPGLMALEVPEPLGEDKKKGKPEKLKRCIRTAAGSSWEDPSLLEWDADDFRIFCGDLGNEVNDDILARAFSRFPSFLKAKVIRDKRTGKTKGYGFVSFKDPSDYVRAMREMNGKYVGSRPIKLRKSMWKDRNLDVVRKKQKEKKKLGLR.

Low complexity predominate over residues 1–20; that stretch reads MASAMAGAGPAPGLPVAGGP. The tract at residues 1-33 is disordered; the sequence is MASAMAGAGPAPGLPVAGGPVVPGPGVGIPGKS. At A2 the chain carries N-acetylalanine. S133 carries the phosphoserine modification. Residues R151, R156, R166, and R179 each carry the asymmetric dimethylarginine modification. Disordered regions lie at residues 171–207 and 317–354; these read LSSA…MLPP and SLRP…PEKL. Positions 193–205 are enriched in pro residues; sequence PPLPGPPGPPMML. Residues 234–478 form a necessary for interaction with HNRNPK region; that stretch reads ELGLGLGLGL…QKEKKKLGLR (245 aa). Residues 343–354 show a composition bias toward basic and acidic residues; sequence GEDKKKGKPEKL. One can recognise an RRM domain in the interval 379–457; the sequence is FRIFCGDLGN…RPIKLRKSMW (79 aa).

The protein belongs to the RRM RBM42 family. As to quaternary structure, interacts with HNRNPK. As to expression, expressed in cell lines (at protein level). Expressed in heart, brain, spleen, lung, liver, skeletal muscle, kidney and testis.

The protein resides in the nucleus. It is found in the cytoplasm. Functionally, binds (via the RRM domain) to the 3'-untranslated region (UTR) of CDKN1A mRNA. This Mus musculus (Mouse) protein is RNA-binding protein 42 (Rbm42).